Consider the following 365-residue polypeptide: Probable UDP-arabinopyranose mutase 1 (365 aa).

A DXD motif motif is present at residues 100 to 102 (DDD). An N-linked (Glc...) arginine glycan is attached at arginine 148.

Belongs to the RGP family. As to quaternary structure, homopentamer or homohexamer. It depends on Mn(2+) as a cofactor. Mg(2+) serves as cofactor. Reversibly glycosylated by UDP-glucose, UDP-xylose and UDP-galactose, but not UDP-mannose. As to expression, expressed in all tissues tested, including root, tuber, leaf, petiole, shoot, stolon and stem.

Its subcellular location is the secreted. It localises to the cell wall. It is found in the cell junction. The protein localises to the plasmodesma. The protein resides in the golgi apparatus. It catalyses the reaction UDP-beta-L-arabinofuranose = UDP-beta-L-arabinopyranose. Probable UDP-L-arabinose mutase involved in the biosynthesis of cell wall non-cellulosic polysaccharides. Was initially shown to possess an autoglycosylating activity which is dependent on the presence of UDP-glucose and manganese. In Solanum tuberosum (Potato), this protein is Probable UDP-arabinopyranose mutase 1.